A 305-amino-acid polypeptide reads, in one-letter code: Aurasperone B biosynthesis cluster protein A (305 aa).

The signal sequence occupies residues 1–26 (MSIFFSIRFWPAAISAAILWLPQVLG). N-linked (GlcNAc...) asparagine glycans are attached at residues asparagine 29, asparagine 34, asparagine 64, asparagine 83, asparagine 132, asparagine 183, asparagine 218, and asparagine 288.

It belongs to the bfoA family.

Functionally, part of the gene cluster that mediates the biosynthesis of aurasperone B, a dimeric gamma-naphthopyrone. The first step in the biosynthesis of aurasperone B is the production of gamma-naphthopyrone precursor YWA1 by the non-reducing polyketide synthase albA, via condensation of one acetyl-CoA starter unit with 6 malonyl-CoA units. YWA1 is then methylated by aunE at position C-6 to yield foncesin which is further methylated at position C-8 by aunD to produce fonsecin B. A key enzyme in the biosynthetic pathway is the cytochrome P450 monooxygenase aunB which catalyzes the oxidative dimerization of fonsecin B to aurasperone B. AunB also catalyzes the oxidative dimerization of rubrofusarin B into aurasperone A. This Aspergillus niger (strain ATCC MYA-4892 / CBS 513.88 / FGSC A1513) protein is Aurasperone B biosynthesis cluster protein A.